The sequence spans 185 residues: Coordinator of PRMT5 and differentiation stimulator (185 aa).

N-acetylmethionine is present on Met-1. Positions Met-1–Ala-109 are disordered. 2 stretches are compositionally biased toward basic and acidic residues: residues Ser-42–Thr-52 and Ser-66–Glu-77. Ser-66 is modified (phosphoserine). Positions Glu-78–Gly-89 are enriched in acidic residues.

As to quaternary structure, interacts with PRMT5. Interacts with histone H4; specifically interacts with the N-terminus of histone H4 but not with histone H3. Interacts with CBFB. Found in a complex with PRMT5, RUNX1 and CBFB.

It localises to the nucleus. Its function is as follows. Histone-binding protein required for histone H4 methyltransferase activity of PRMT5. Specifically required for histone H4 'Arg-3' methylation mediated by PRMT5, but not histone H3 'Arg-8' methylation, suggesting that it modulates the substrate specificity of PRMT5. Specifically interacts with the N-terminus of histone H4 but not with histone H3, suggesting that it acts by promoting the association between histone H4 and PRMT5. Involved in CCNE1 promoter repression. Plays a role in muscle cell differentiation by modulating the recruitment of PRMT5 to the promoter of genes involved in the coordination between cell cycle exit and muscle differentiation. The polypeptide is Coordinator of PRMT5 and differentiation stimulator (COPRS) (Bos taurus (Bovine)).